The following is a 449-amino-acid chain: tRNA-2-methylthio-N(6)-dimethylallyladenosine synthase (449 aa).

Residues lysine 3–alanine 118 form the MTTase N-terminal domain. The [4Fe-4S] cluster site is built by cysteine 12, cysteine 49, cysteine 81, cysteine 155, cysteine 159, and cysteine 162. The region spanning arginine 141 to serine 376 is the Radical SAM core domain. The TRAM domain maps to glutamate 377–threonine 440.

Belongs to the methylthiotransferase family. MiaB subfamily. Monomer. It depends on [4Fe-4S] cluster as a cofactor.

Its subcellular location is the cytoplasm. The catalysed reaction is N(6)-dimethylallyladenosine(37) in tRNA + (sulfur carrier)-SH + AH2 + 2 S-adenosyl-L-methionine = 2-methylsulfanyl-N(6)-dimethylallyladenosine(37) in tRNA + (sulfur carrier)-H + 5'-deoxyadenosine + L-methionine + A + S-adenosyl-L-homocysteine + 2 H(+). In terms of biological role, catalyzes the methylthiolation of N6-(dimethylallyl)adenosine (i(6)A), leading to the formation of 2-methylthio-N6-(dimethylallyl)adenosine (ms(2)i(6)A) at position 37 in tRNAs that read codons beginning with uridine. The polypeptide is tRNA-2-methylthio-N(6)-dimethylallyladenosine synthase (Paracidovorax citrulli (strain AAC00-1) (Acidovorax citrulli)).